Reading from the N-terminus, the 559-residue chain is Actin-binding protein WASF1 (559 aa).

Disordered regions lie at residues T169–R202, R307–V400, and V412–P492. Residues K182–R202 are compositionally biased toward basic and acidic residues. Positions P322–P332 are enriched in pro residues. Residues S333 to S346 are compositionally biased toward low complexity. An Asymmetric dimethylarginine; alternate modification is found at R341. R341 bears the Omega-N-methylarginine; alternate mark. 4 stretches are compositionally biased toward pro residues: residues T347–P374, P384–P399, L423–I437, and T458–Q477. Position 489 is a phosphoserine (S489). A WH2 domain is found at A497–V514.

It belongs to the SCAR/WAVE family. In terms of assembly, component of the WAVE1 complex composed of ABI2, CYFIP1 or CYFIP2, BRK1, NCKAP1 and WASF1/WAVE1. Within the complex, a heterodimer containing NCKAP1 and CYFIP1 interacts with a heterotrimer formed by WAVE1, ABI2 and BRK1. CYFIP2 binds to activated RAC1 which causes the complex to dissociate, releasing activated WASF1. The complex can also be activated by NCK1. Binds actin and the Arp2/3 complex. Interacts with BAIAP2. Interacts with SHANK3; the interaction mediates the association of SHANK3 with the WAVE1 complex. Interacts with ABI1 (via N-terminus). Interacts with SORBS2; this interaction greatly enhances phosphorylation by ABL1 and dephosphorylation by PTPN12 and might mediate partial to focal adhesion sites. In terms of tissue distribution, expressed in hippocampal neurons (at protein level).

Its subcellular location is the cytoplasm. It localises to the cytoskeleton. The protein localises to the synapse. The protein resides in the cell junction. It is found in the focal adhesion. Downstream effector molecule involved in the transmission of signals from tyrosine kinase receptors and small GTPases to the actin cytoskeleton. Promotes formation of actin filaments. Part of the WAVE complex that regulates lamellipodia formation. The WAVE complex regulates actin filament reorganization via its interaction with the Arp2/3 complex. As component of the WAVE1 complex, required for BDNF-NTRK2 endocytic trafficking and signaling from early endosomes. Also involved in the regulation of mitochondrial dynamics. In Rattus norvegicus (Rat), this protein is Actin-binding protein WASF1 (Wasf1).